Reading from the N-terminus, the 98-residue chain is NADH-ubiquinone oxidoreductase chain 4L (98 aa).

3 consecutive transmembrane segments (helical) span residues 1 to 21 (MSPI…GMLV), 26 to 46 (LMAS…TIAL), and 61 to 81 (ITLL…LVSI).

Belongs to the complex I subunit 4L family. As to quaternary structure, core subunit of respiratory chain NADH dehydrogenase (Complex I) which is composed of 45 different subunits.

It is found in the mitochondrion inner membrane. The enzyme catalyses a ubiquinone + NADH + 5 H(+)(in) = a ubiquinol + NAD(+) + 4 H(+)(out). Its function is as follows. Core subunit of the mitochondrial membrane respiratory chain NADH dehydrogenase (Complex I) which catalyzes electron transfer from NADH through the respiratory chain, using ubiquinone as an electron acceptor. Part of the enzyme membrane arm which is embedded in the lipid bilayer and involved in proton translocation. The polypeptide is NADH-ubiquinone oxidoreductase chain 4L (MT-ND4L) (Chlorocebus aethiops (Green monkey)).